Reading from the N-terminus, the 173-residue chain is Co-chaperone protein HscB homolog (173 aa).

The J domain maps to 5–77 (SHFALFDLEP…SQRARYLLSL (73 aa)).

This sequence belongs to the HscB family. Interacts with HscA and stimulates its ATPase activity.

Functionally, co-chaperone involved in the maturation of iron-sulfur cluster-containing proteins. Seems to help targeting proteins to be folded toward HscA. The chain is Co-chaperone protein HscB homolog from Azotobacter vinelandii (strain DJ / ATCC BAA-1303).